The sequence spans 622 residues: MTNDVEMKSETEELPPFPTVHILQVVKDAQQQHGLRHGDYARYRKYCAAKLERMRKALKFTNSHNCQKKRKAKFVKKWLSVESVQNVQFLNFGIFESERRYAEAMIDKITLEDNPEKSRKKFSMINSLRKAVLHATNLEKIVQESERFDAPTKLEAQAYAAWMRGMCSFESRNWQKASESLKLAKTVYEKLAEATNNTTLSSIFKGRCREIQPQLRLCEFNIAESPGAVGTMTELMELRMQMGEGGDSSVDKLISEMRASATSAEVVTIEWGGAKSTVDDEKAKQVVQEWKQTEVELAQCQTPKEKMALFEKATADTRDAIDRISDIIRRKSSENADTTVLQSIKAYLEFLKMNGTASRYLAIIDNTKSEKKSKPQDLLRLYDSVIEIYKEVAEIPGADHDKNLIQAFEVKVEYYRAFRCFYMASSYSALHKYSEAAALFDRTVSRVQDAEGKLKKLKSSSFITNETQSSLNELRSEVESAKVTVRAARLASAAGDVKTDSELAKIIDKRPLLETVNEWRQWDVRNSLKDKKTIPVASLPPAFIPMPNKPIFFDLANFHLTMPNVDDRLEKLQKDRDATPKKAAKGSSAAAASSKTSNQEEEEQQGLTGMLSGWKKSFWGNK.

Residues 576–622 (RDATPKKAAKGSSAAAASSKTSNQEEEEQQGLTGMLSGWKKSFWGNK) are disordered. Residues 585–595 (KGSSAAAASSK) show a composition bias toward low complexity.

Belongs to the SRP68 family. In terms of assembly, heterodimer with srpa-72. Srpa-68/srpa-72 heterodimer formation is stabilized by the presence of 7SL RNA. Component of a signal recognition particle (SRP) complex that consists of a 7SL RNA molecule of 300 nucleotides and six protein subunits: srpa-72, srpa-68, SRP54, F37F2.2/SRP19, F25G6.8/SRP14 and ZK512.4/SRP9. Within the SRP complex, interacts (via C-terminus) with srpa-72 (via N-terminus).

The protein localises to the cytoplasm. It is found in the nucleus. Its subcellular location is the nucleolus. It localises to the endoplasmic reticulum. In terms of biological role, component of the signal recognition particle (SRP) complex, a ribonucleoprotein complex that mediates the cotranslational targeting of secretory and membrane proteins to the endoplasmic reticulum (ER). The SRP complex interacts with the signal sequence in nascent secretory and membrane proteins and directs them to the membrane of the ER. The SRP complex targets the ribosome-nascent chain complex to the SRP receptor (SR), which is anchored in the ER, where SR compaction and GTPase rearrangement drive cotranslational protein translocation into the ER. Binds the signal recognition particle RNA (7SL RNA), srpa-72 binds to this complex subsequently. The SRP complex possibly participates in the elongation arrest function. The protein is Signal recognition particle subunit SRP68 of Caenorhabditis elegans.